A 296-amino-acid chain; its full sequence is MIVPLQGAQMLQMLEKSLKKYLPESLKVYGTIYHVNHGNPFNLKALVDKWPDFNTVVVRPQEQEMKDDLDFYTNTYQIYSKDPENCQEFLGSSEVINWKQHLQIQSSQSHLNKAIQNLASIHSLQVKHSENILYVVSETVRKLFPSLLDTKNLSPGSGKPKAINQEMFKLSSLDVTHAALVNKFWLFGGNERSQRFIERCIKNFPSSCVLGPEGTPASWTLMDQTGEMRMGGTVPQYRAQGLVSFVIYSQDQIMKKRGFPVYSHTDKSNTVMQKMSYSLQHLPMPCAWNQWICVPM.

The residue at position 16 (Lys16) is an N6-acetyllysine; alternate. Lys16 is modified (N6-succinyllysine; alternate). Lys113 is modified (N6-acetyllysine). N6-acetyllysine; alternate occurs at positions 127 and 142. 2 positions are modified to N6-succinyllysine; alternate: Lys127 and Lys142. The residue at position 159 (Lys159) is an N6-acetyllysine. An N6-succinyllysine modification is found at Lys169. N6-acetyllysine; alternate occurs at positions 183 and 256. N6-succinyllysine; alternate occurs at positions 183 and 256. Residue Lys267 is modified to N6-succinyllysine.

This sequence belongs to the glycine N-acyltransferase family.

It localises to the mitochondrion. It carries out the reaction an acyl-CoA + glycine = an N-acylglycine + CoA + H(+). It catalyses the reaction benzoyl-CoA + glycine = N-benzoylglycine + CoA + H(+). Functionally, mitochondrial acyltransferase which transfers an acyl group to the N-terminus of glycine and glutamine, although much less efficiently. Can conjugate a multitude of substrates to form a variety of N-acylglycines, thereby detoxify xenobiotics, such as benzoic acid or salicylic acid, and endogenous organic acids, such as isovaleric acid. In Rattus norvegicus (Rat), this protein is Glycine N-acyltransferase (Glyat).